Reading from the N-terminus, the 270-residue chain is S-adenosylmethionine decarboxylase proenzyme (270 aa).

The active-site Schiff-base intermediate with substrate; via pyruvic acid is serine 117. Position 117 is a pyruvic acid (Ser); by autocatalysis (serine 117). The active-site Proton acceptor; for processing activity is histidine 122. The active-site Proton donor; for catalytic activity is the cysteine 145.

The protein belongs to the prokaryotic AdoMetDC family. Type 2 subfamily. In terms of assembly, heterooctamer of four alpha and four beta chains arranged as a tetramer of alpha/beta heterodimers. Pyruvate serves as cofactor. Post-translationally, is synthesized initially as an inactive proenzyme. Formation of the active enzyme involves a self-maturation process in which the active site pyruvoyl group is generated from an internal serine residue via an autocatalytic post-translational modification. Two non-identical subunits are generated from the proenzyme in this reaction, and the pyruvate is formed at the N-terminus of the alpha chain, which is derived from the carboxyl end of the proenzyme. The post-translation cleavage follows an unusual pathway, termed non-hydrolytic serinolysis, in which the side chain hydroxyl group of the serine supplies its oxygen atom to form the C-terminus of the beta chain, while the remainder of the serine residue undergoes an oxidative deamination to produce ammonia and the pyruvoyl group blocking the N-terminus of the alpha chain.

It carries out the reaction S-adenosyl-L-methionine + H(+) = S-adenosyl 3-(methylsulfanyl)propylamine + CO2. It participates in amine and polyamine biosynthesis; S-adenosylmethioninamine biosynthesis; S-adenosylmethioninamine from S-adenosyl-L-methionine: step 1/1. Its function is as follows. Catalyzes the decarboxylation of S-adenosylmethionine to S-adenosylmethioninamine (dcAdoMet), the propylamine donor required for the synthesis of the polyamines spermine and spermidine from the diamine putrescine. This Pseudoalteromonas translucida (strain TAC 125) protein is S-adenosylmethionine decarboxylase proenzyme.